The sequence spans 112 residues: Gastrula zinc finger protein XlCGF16.1 (112 aa).

C2H2-type zinc fingers lie at residues 6 to 28 (YNCS…QKTH), 34 to 56 (FVCF…QRIH), 62 to 84 (FSCT…HKTH), and 90 to 112 (FLCF…HRTH).

Belongs to the krueppel C2H2-type zinc-finger protein family.

It is found in the nucleus. Functionally, may be involved in transcriptional regulation. The protein is Gastrula zinc finger protein XlCGF16.1 of Xenopus laevis (African clawed frog).